The following is a 339-amino-acid chain: NADH-quinone oxidoreductase subunit H (339 aa).

9 helical membrane-spanning segments follow: residues 9–29 (IFPLIIIALKVVAITTPLILC), 50–70 (PNVVGPFGLLQPIADAVKLLF), 82–102 (ILFILAPMITFILSLIGWAVI), 115–135 (VGVLYILAISSLSVYGIIIAG), 161–181 (MGLVIITVLLTTGTLNLSEII), 187–207 (MPWWIDLMLLPMGVVFFISVL), 235–255 (MGFALFFLGEYANMILVSAMT), 275–295 (IPGFFWFVFKVGFLLFCFLWI), and 311–331 (GWKVFLPLTLFWVVLVSSVLV).

This sequence belongs to the complex I subunit 1 family. In terms of assembly, NDH-1 is composed of 14 different subunits. Subunits NuoA, H, J, K, L, M, N constitute the membrane sector of the complex.

The protein localises to the cell inner membrane. The enzyme catalyses a quinone + NADH + 5 H(+)(in) = a quinol + NAD(+) + 4 H(+)(out). Functionally, NDH-1 shuttles electrons from NADH, via FMN and iron-sulfur (Fe-S) centers, to quinones in the respiratory chain. The immediate electron acceptor for the enzyme in this species is believed to be ubiquinone. Couples the redox reaction to proton translocation (for every two electrons transferred, four hydrogen ions are translocated across the cytoplasmic membrane), and thus conserves the redox energy in a proton gradient. This subunit may bind ubiquinone. This is NADH-quinone oxidoreductase subunit H from Rickettsia peacockii (strain Rustic).